Here is a 24-residue protein sequence, read N- to C-terminus: Pandinin-2 (24 aa).

Homooligomer. In terms of tissue distribution, expressed by the venom gland.

It localises to the secreted. It is found in the target cell membrane. In terms of biological role, disrupts cell membranes through formation of pores. Has strong antimicrobial activity against Gram-positive bacteria B.subtilis, S.epidermidis, E.faecalis and S.aureus. Is less active against Gram-negative bacteria P.aeruginosa and E.coli. Also increases efficacy of antibiotics (ampicillin, chloramphenicol, streptomycin, kanamycin, novobiocin) when tested against E.coli, probably by facilitating their incorporation into the bacteria. Possesses antifungal activity against C.albicans and hemolytic activity against human, sheep and pig erythrocytes. The sequence is that of Pandinin-2 from Pandinus imperator (Emperor scorpion).